Here is a 198-residue protein sequence, read N- to C-terminus: Small ribosomal subunit protein uS4 (198 aa).

The S4 RNA-binding domain maps to 91-154 (SRLDNVVYRL…KNLNIVQEAV (64 aa)).

The protein belongs to the universal ribosomal protein uS4 family. As to quaternary structure, part of the 30S ribosomal subunit. Contacts protein S5. The interaction surface between S4 and S5 is involved in control of translational fidelity.

One of the primary rRNA binding proteins, it binds directly to 16S rRNA where it nucleates assembly of the body of the 30S subunit. Functionally, with S5 and S12 plays an important role in translational accuracy. The chain is Small ribosomal subunit protein uS4 from Onion yellows phytoplasma (strain OY-M).